A 280-amino-acid chain; its full sequence is Probable formate transporter (280 aa).

6 consecutive transmembrane segments (helical) span residues 33–49 (LSFV…LLAE), 67–83 (LVFG…VVIA), 116–133 (SWVF…VLAY), 177–195 (FWRA…YLAV), 204–219 (SFGI…CIGF), and 253–272 (LGNI…FTYL).

This sequence belongs to the FNT transporter (TC 1.A.16) family.

Its subcellular location is the cell membrane. In terms of biological role, may act as a formate transporter. The sequence is that of Probable formate transporter (fdhC) from Methanobacterium formicicum.